Here is a 515-residue protein sequence, read N- to C-terminus: 2-isopropylmalate synthase (515 aa).

Residues 5-267 form the Pyruvate carboxyltransferase domain; that stretch reads VIIFDTTLRD…DTRINTQEIH (263 aa). 4 residues coordinate Mn(2+): aspartate 14, histidine 202, histidine 204, and asparagine 238. The regulatory domain stretch occupies residues 392–515; that stretch reads VLDKLSAHST…VADIKSHKHH (124 aa).

The protein belongs to the alpha-IPM synthase/homocitrate synthase family. LeuA type 1 subfamily. Homodimer. Requires Mn(2+) as cofactor.

The protein resides in the cytoplasm. The enzyme catalyses 3-methyl-2-oxobutanoate + acetyl-CoA + H2O = (2S)-2-isopropylmalate + CoA + H(+). Its pathway is amino-acid biosynthesis; L-leucine biosynthesis; L-leucine from 3-methyl-2-oxobutanoate: step 1/4. Catalyzes the condensation of the acetyl group of acetyl-CoA with 3-methyl-2-oxobutanoate (2-ketoisovalerate) to form 3-carboxy-3-hydroxy-4-methylpentanoate (2-isopropylmalate). The protein is 2-isopropylmalate synthase of Haemophilus influenzae (strain 86-028NP).